The chain runs to 370 residues: MNFKVLYQDNNARCGVFNFNQEIIETPVFMPVGTYGAVKSISTEEIKNTGSRIILSNAFHLYFRPGLEIIKLHGNLHNFMNWSGPILTDSGGFQVFSLSRFCKVNEEGVIFQNHIDGKKTFLTPKISMKIQSDLGSNIVMIFDQCIEYNQNWEKTKNAMERSLYWAKKSRIYFDSYKNKNSLFGIIHGGIYPSLRDISLQELIKIDFDGYALGGLAVGEPKIEMYKLLDHICPQIPKNKPRYLMGVGKPEDLIEGVRRGVDMFDCVIPTRNARNGHLFVTNGVIKIRNKKYKKDLSCLDNTCVCYTCRYYSRSYLHHLDACNEILGARLNTIHNLHYYQTLMSNIRNSIKNNTFEQFSVNFYKQKNKIDF.

Catalysis depends on Asp89, which acts as the Proton acceptor. Substrate is bound by residues 89 to 93 (DSGGF), Asp143, and Gly214. The interval 245–251 (GVGKPED) is RNA binding. Catalysis depends on Asp264, which acts as the Nucleophile. The interval 269–273 (TRNAR) is RNA binding; important for wobble base 34 recognition. Residues Cys302, Cys304, Cys307, and His333 each contribute to the Zn(2+) site.

It belongs to the queuine tRNA-ribosyltransferase family. In terms of assembly, homodimer. Within each dimer, one monomer is responsible for RNA recognition and catalysis, while the other monomer binds to the replacement base PreQ1. Requires Zn(2+) as cofactor.

The catalysed reaction is 7-aminomethyl-7-carbaguanine + guanosine(34) in tRNA = 7-aminomethyl-7-carbaguanosine(34) in tRNA + guanine. It functions in the pathway tRNA modification; tRNA-queuosine biosynthesis. Functionally, catalyzes the base-exchange of a guanine (G) residue with the queuine precursor 7-aminomethyl-7-deazaguanine (PreQ1) at position 34 (anticodon wobble position) in tRNAs with GU(N) anticodons (tRNA-Asp, -Asn, -His and -Tyr). Catalysis occurs through a double-displacement mechanism. The nucleophile active site attacks the C1' of nucleotide 34 to detach the guanine base from the RNA, forming a covalent enzyme-RNA intermediate. The proton acceptor active site deprotonates the incoming PreQ1, allowing a nucleophilic attack on the C1' of the ribose to form the product. After dissociation, two additional enzymatic reactions on the tRNA convert PreQ1 to queuine (Q), resulting in the hypermodified nucleoside queuosine (7-(((4,5-cis-dihydroxy-2-cyclopenten-1-yl)amino)methyl)-7-deazaguanosine). The chain is Queuine tRNA-ribosyltransferase from Buchnera aphidicola subsp. Acyrthosiphon pisum (strain APS) (Acyrthosiphon pisum symbiotic bacterium).